A 105-amino-acid chain; its full sequence is Iron-sulfur cluster assembly protein CyaY (105 aa).

This sequence belongs to the frataxin family.

Involved in iron-sulfur (Fe-S) cluster assembly. May act as a regulator of Fe-S biogenesis. This Psychromonas ingrahamii (strain DSM 17664 / CCUG 51855 / 37) protein is Iron-sulfur cluster assembly protein CyaY.